A 200-amino-acid chain; its full sequence is Cytochrome c biogenesis ATP-binding export protein CcmA (200 aa).

Positions 1 to 200 (MRLSGNGLRC…ARELRIGGAA (200 aa)) constitute an ABC transporter domain. An ATP-binding site is contributed by 35-42 (GPNGAGKT).

The protein belongs to the ABC transporter superfamily. CcmA exporter (TC 3.A.1.107) family. The complex is composed of two ATP-binding proteins (CcmA) and two transmembrane proteins (CcmB).

The protein resides in the cell inner membrane. It carries out the reaction heme b(in) + ATP + H2O = heme b(out) + ADP + phosphate + H(+). Functionally, part of the ABC transporter complex CcmAB involved in the biogenesis of c-type cytochromes; once thought to export heme, this seems not to be the case, but its exact role is uncertain. Responsible for energy coupling to the transport system. The polypeptide is Cytochrome c biogenesis ATP-binding export protein CcmA (Nitrobacter winogradskyi (strain ATCC 25391 / DSM 10237 / CIP 104748 / NCIMB 11846 / Nb-255)).